Consider the following 393-residue polypeptide: S-adenosylmethionine synthase 3 (393 aa).

Residue glutamate 9 participates in Mg(2+) binding. An ATP-binding site is contributed by histidine 15. Glutamate 43 contributes to the K(+) binding site. The L-methionine site is built by glutamate 56 and glutamine 99. Residues 167 to 169 (DGK), 235 to 238 (SGRF), aspartate 246, 252 to 253 (RK), alanine 269, lysine 273, and lysine 277 each bind ATP. Residue aspartate 246 participates in L-methionine binding. Lysine 277 provides a ligand contact to L-methionine.

It belongs to the AdoMet synthase family. Homotetramer. The cofactor is Mn(2+). Mg(2+) serves as cofactor. It depends on Co(2+) as a cofactor. K(+) is required as a cofactor.

It localises to the cytoplasm. It carries out the reaction L-methionine + ATP + H2O = S-adenosyl-L-methionine + phosphate + diphosphate. It participates in amino-acid biosynthesis; S-adenosyl-L-methionine biosynthesis; S-adenosyl-L-methionine from L-methionine: step 1/1. In terms of biological role, catalyzes the formation of S-adenosylmethionine from methionine and ATP. The reaction comprises two steps that are both catalyzed by the same enzyme: formation of S-adenosylmethionine (AdoMet) and triphosphate, and subsequent hydrolysis of the triphosphate. The polypeptide is S-adenosylmethionine synthase 3 (SAM3) (Petunia hybrida (Petunia)).